The chain runs to 572 residues: Fusion glycoprotein F0 (572 aa).

Residues 1 to 25 (MATTTMRMIISIILISTYVPHITLC) form the signal peptide. The Extracellular portion of the chain corresponds to 26–522 (QNITEEFYQS…SVDVGKSTTN (497 aa)). N27 and N70 each carry an N-linked (GlcNAc...) asparagine; by host glycan. Disulfide bonds link C37-C437, C69-C212, C311-C341, C320-C331, C356-C365, C380-C391, and C414-C420. A coiled-coil region spans residues 76 to 96 (VKLIKQELERYNNAVAELQSL). An N-linked (GlcNAc...) asparagine; by host glycan is attached at N120. The tract at residues 137-157 (FLGFLLGIGSAIASGVAVSKV) is fusion peptide. Residues 156–207 (KVLHLEGEVNKIKNALLSTNKAVVSLSNGVSVLTSKVLDLKNYIDKELLPKV) are a coiled coil. The stretch at 479-514 (LVFPSDEFDASIAQVNAKINQSLAFIRRSDELLHSV) forms a coiled coil. An N-linked (GlcNAc...) asparagine; by host glycan is attached at N498. A helical membrane pass occupies residues 523 to 548 (VVITTIIIVIVVVILMLITVGLLFYC). Residue C548 is the site of S-palmitoyl cysteine; by host attachment. The Cytoplasmic segment spans residues 549-572 (KTRSTPIMLGKDQLSSINNLSFSK).

The protein belongs to the paramyxoviruses fusion glycoprotein family. In terms of assembly, homotrimer. Heterodimer with fusion protein F2; disulfide-linked. Part of a complex composed of F1, F2 and G glycoproteins. As a heterodimer with F2, interacts with host RHOA; this interaction facilitates virus-induced syncytium formation. Homotrimer. Heterodimer with fusion protein F1; disulfide-linked. Part of a complex composed of F1, F2 and G glycoproteins. As a heterodimer with F1, interacts with host RHOA; this interaction facilitates virus-induced syncytium formation. The F glycoprotein is synthesized as a F0 inactive precursor that is heavily N-glycosylated and processed at two sites by a host furin-like protease probably in the Golgi. The cleavage site between p27 and F1 may occur after endocytosis to yield the mature F1 and F2 proteins. Both cleavages are required for membrane fusion and p27 is released from the processed protein.

It is found in the host Golgi apparatus membrane. Its subcellular location is the virion membrane. It localises to the host cell membrane. Its function is as follows. Inactive precursor that is cleaved at two sites by a furin-like protease to give rise to the mature F1 and F2 fusion glycoproteins. In terms of biological role, class I viral fusion protein. Under the current model, the protein has at least 3 conformational states: pre-fusion native state, pre-hairpin intermediate state, and post-fusion hairpin state. During viral and plasma cell membrane fusion, the coiled coil regions assume a trimer-of-hairpins structure, positioning the fusion peptide in close proximity to the C-terminal region of the ectodomain. The formation of this structure appears to drive apposition and subsequent fusion of viral and cellular membranes leading to delivery of the nucleocapsid into the cytoplasm. This fusion is pH independent and occurs at the plasma or endosomal membrane. The trimer of F1-F2 (F protein) also facilitates the attachment and entry into the host cell. Later in infection, F protein expressed at the plasma membrane of infected cells can mediate fusion with adjacent cells to form syncytia, a cytopathic effect that could lead to tissue necrosis. Functionally, major determinant of the species specificity of RSV infection. The trimer of F1-F2 (F protein) also facilitates the attachment and entry into the host cell. Later in infection, F protein expressed at the plasma membrane of infected cells can mediate fusion with adjacent cells to form syncytia, a cytopathic effect that could lead to tissue necrosis. The sequence is that of Fusion glycoprotein F0 (F) from Bovine respiratory syncytial virus (strain A51908) (BRS).